Here is a 122-residue protein sequence, read N- to C-terminus: Large ribosomal subunit protein uL14 (122 aa).

It belongs to the universal ribosomal protein uL14 family. In terms of assembly, part of the 50S ribosomal subunit. Forms a cluster with proteins L3 and L19. In the 70S ribosome, L14 and L19 interact and together make contacts with the 16S rRNA in bridges B5 and B8.

Binds to 23S rRNA. Forms part of two intersubunit bridges in the 70S ribosome. The polypeptide is Large ribosomal subunit protein uL14 (Thermobifida fusca (strain YX)).